A 291-amino-acid chain; its full sequence is Small ribosomal subunit protein uS2 (291 aa).

A disordered region spans residues 255–291; sequence AGAATGEWSEAQGAQWETGTGAPAADWAAEPAKESSW.

It belongs to the universal ribosomal protein uS2 family. As to quaternary structure, component of the small ribosomal subunit. Mature ribosomes consist of a small (40S) and a large (60S) subunit. The 40S subunit contains about 33 different proteins and 1 molecule of RNA (18S). The 60S subunit contains about 49 different proteins and 3 molecules of RNA (25S, 5.8S and 5S). Interacts with RPS21.

The protein localises to the cytoplasm. Functionally, required for the assembly and/or stability of the 40S ribosomal subunit. Required for the processing of the 20S rRNA-precursor to mature 18S rRNA in a late step of the maturation of 40S ribosomal subunits. This chain is Small ribosomal subunit protein uS2, found in Podospora anserina (strain S / ATCC MYA-4624 / DSM 980 / FGSC 10383) (Pleurage anserina).